Reading from the N-terminus, the 143-residue chain is General odorant-binding protein 28a (143 aa).

The signal sequence occupies residues 1-21 (MQSTPIILVAIVLLGAALVRA). 3 disulfide bridges follow: Cys38/Cys69, Cys65/Cys123, and Cys113/Cys132.

Expressed in antenna, mostly on the medial and posterior surface of the third antennal segment.

The protein localises to the secreted. This chain is General odorant-binding protein 28a (Obp28a), found in Drosophila melanogaster (Fruit fly).